A 192-amino-acid chain; its full sequence is Probable nicotinate-nucleotide adenylyltransferase (192 aa).

This sequence belongs to the NadD family.

It catalyses the reaction nicotinate beta-D-ribonucleotide + ATP + H(+) = deamido-NAD(+) + diphosphate. It participates in cofactor biosynthesis; NAD(+) biosynthesis; deamido-NAD(+) from nicotinate D-ribonucleotide: step 1/1. In terms of biological role, catalyzes the reversible adenylation of nicotinate mononucleotide (NaMN) to nicotinic acid adenine dinucleotide (NaAD). The polypeptide is Probable nicotinate-nucleotide adenylyltransferase (Rhizobium etli (strain ATCC 51251 / DSM 11541 / JCM 21823 / NBRC 15573 / CFN 42)).